The sequence spans 161 residues: 6,7-dimethyl-8-ribityllumazine synthase (161 aa).

5-amino-6-(D-ribitylamino)uracil-binding positions include W26, 58 to 60 (SFE), and 81 to 83 (VVI). Position 86-87 (86-87 (GT)) interacts with (2S)-2-hydroxy-3-oxobutyl phosphate. H89 functions as the Proton donor in the catalytic mechanism. F114 lines the 5-amino-6-(D-ribitylamino)uracil pocket. Residue R128 participates in (2S)-2-hydroxy-3-oxobutyl phosphate binding.

Belongs to the DMRL synthase family.

It carries out the reaction (2S)-2-hydroxy-3-oxobutyl phosphate + 5-amino-6-(D-ribitylamino)uracil = 6,7-dimethyl-8-(1-D-ribityl)lumazine + phosphate + 2 H2O + H(+). Its pathway is cofactor biosynthesis; riboflavin biosynthesis; riboflavin from 2-hydroxy-3-oxobutyl phosphate and 5-amino-6-(D-ribitylamino)uracil: step 1/2. Functionally, catalyzes the formation of 6,7-dimethyl-8-ribityllumazine by condensation of 5-amino-6-(D-ribitylamino)uracil with 3,4-dihydroxy-2-butanone 4-phosphate. This is the penultimate step in the biosynthesis of riboflavin. The sequence is that of 6,7-dimethyl-8-ribityllumazine synthase from Streptomyces coelicolor (strain ATCC BAA-471 / A3(2) / M145).